A 252-amino-acid polypeptide reads, in one-letter code: Transcriptional regulatory protein HptR (252 aa).

The Response regulatory domain maps to K3–V118. At D55 the chain carries 4-aspartylphosphate. Residues N153–Q250 form the HTH araC/xylS-type domain. 2 consecutive DNA-binding regions (H-T-H motif) follow at residues S170 to V191 and H217 to L240.

Phosphorylated by HptS.

The protein resides in the cytoplasm. In terms of biological role, member of the two-component regulatory system HptS/HptR that regulates genes involved in hexose phosphate transport system in response to changes in extracellular phosphate sources. Activates uhpT expression to facilitate glucose-6-phosphate/G6P utilization by directly binding to its promoter. Antagonizes CcpA-dependent transcription of a subset of CcpA-regulated genes involved in antibiotic susceptibility. This is Transcriptional regulatory protein HptR (hptR) from Staphylococcus aureus (strain MRSA252).